The following is a 299-amino-acid chain: uncharacterized protein (299 aa).

A helical membrane pass occupies residues 4–20 (LFFIFVMLIVLLCGCTS).

It localises to the membrane. This is an uncharacterized protein from Methanocaldococcus jannaschii (strain ATCC 43067 / DSM 2661 / JAL-1 / JCM 10045 / NBRC 100440) (Methanococcus jannaschii).